The chain runs to 862 residues: DNA mismatch repair protein MutS (862 aa).

613-620 (GPNMAGKS) contacts ATP.

The protein belongs to the DNA mismatch repair MutS family.

This protein is involved in the repair of mismatches in DNA. It is possible that it carries out the mismatch recognition step. This protein has a weak ATPase activity. In Desulfitobacterium hafniense (strain Y51), this protein is DNA mismatch repair protein MutS.